A 501-amino-acid polypeptide reads, in one-letter code: ATP-dependent rRNA helicase RRP3 (501 aa).

Residues 3–44 (KIVKRKEKKANDELTSLAEKIRAKALENQKKLIEAEKEGGSE) adopt a coiled-coil conformation. The segment at 36 to 79 (EAEKEGGSESDSEEDATAEKKKVLKSKSKSTVSTQNENTNEDES) is disordered. S43, S45, and S47 each carry phosphoserine. Positions 81–109 (ESFSELNLVPELIQACKNLNYSKPTPIQS) match the Q motif motif. Residues 112 to 284 (IPPALEGHDI…RASLTNPVKC (173 aa)) form the Helicase ATP-binding domain. 125-132 (AQTGSGKT) is an ATP binding site. The DEAD box signature appears at 231-234 (DEAD). The 155-residue stretch at 307-461 (LKNTYLIYLL…NIILTLRDSV (155 aa)) folds into the Helicase C-terminal domain. Residues 480–501 (IARGKGRRGRMMTRENMDMGER) are disordered. Positions 491-501 (MTRENMDMGER) are enriched in basic and acidic residues.

Belongs to the DEAD box helicase family. DDX47/RRP3 subfamily. In terms of assembly, interacts with the SSU processome.

Its subcellular location is the nucleus. It catalyses the reaction ATP + H2O = ADP + phosphate + H(+). In terms of biological role, ATP-dependent rRNA helicase required for pre-ribosomal RNA processing. Involved in the maturation of the 35S-pre-rRNA and to its cleavage to mature 18S rRNA. The sequence is that of ATP-dependent rRNA helicase RRP3 from Saccharomyces cerevisiae (strain YJM789) (Baker's yeast).